The following is a 239-amino-acid chain: tRNA (guanine-N(7)-)-methyltransferase (239 aa).

4 residues coordinate S-adenosyl-L-methionine: Glu-69, Glu-94, Asp-121, and Asp-144. Asp-144 is an active-site residue. A substrate-binding site is contributed by Lys-148. An interaction with RNA region spans residues 150–155; that stretch reads RHNKRR. Residues Asp-180 and 217-220 each bind substrate; that span reads TKFE.

It belongs to the class I-like SAM-binding methyltransferase superfamily. TrmB family. As to quaternary structure, monomer.

The enzyme catalyses guanosine(46) in tRNA + S-adenosyl-L-methionine = N(7)-methylguanosine(46) in tRNA + S-adenosyl-L-homocysteine. It participates in tRNA modification; N(7)-methylguanine-tRNA biosynthesis. Functionally, catalyzes the formation of N(7)-methylguanine at position 46 (m7G46) in tRNA. The sequence is that of tRNA (guanine-N(7)-)-methyltransferase from Yersinia pseudotuberculosis serotype O:1b (strain IP 31758).